Here is a 201-residue protein sequence, read N- to C-terminus: Large ribosomal subunit protein uL4 (201 aa).

The disordered stretch occupies residues 44–68 (RAQKSRAEVSGSGRKPWRQKGTGRA).

This sequence belongs to the universal ribosomal protein uL4 family. Part of the 50S ribosomal subunit.

One of the primary rRNA binding proteins, this protein initially binds near the 5'-end of the 23S rRNA. It is important during the early stages of 50S assembly. It makes multiple contacts with different domains of the 23S rRNA in the assembled 50S subunit and ribosome. Functionally, forms part of the polypeptide exit tunnel. The polypeptide is Large ribosomal subunit protein uL4 (Buchnera aphidicola subsp. Acyrthosiphon pisum (strain APS) (Acyrthosiphon pisum symbiotic bacterium)).